We begin with the raw amino-acid sequence, 393 residues long: NADH-quinone oxidoreductase subunit H 2 (393 aa).

10 consecutive transmembrane segments (helical) span residues 13–33 (VLVT…IVLV), 79–99 (AIFW…FAVI), 112–132 (VGLL…ILGG), 158–178 (LAFA…QGIV), 186–206 (VWGI…YIIA), 240–260 (LYFL…VTLF), 278–298 (LNYG…FTLI), 309–329 (VLLG…IPMV), 333–353 (MIGL…MIWF), and 368–388 (IGWK…AVLG).

It belongs to the complex I subunit 1 family. As to quaternary structure, NDH-1 is composed of 14 different subunits. Subunits NuoA, H, J, K, L, M, N constitute the membrane sector of the complex.

It localises to the cell inner membrane. It carries out the reaction a quinone + NADH + 5 H(+)(in) = a quinol + NAD(+) + 4 H(+)(out). In terms of biological role, NDH-1 shuttles electrons from NADH, via FMN and iron-sulfur (Fe-S) centers, to quinones in the respiratory chain. The immediate electron acceptor for the enzyme in this species is believed to be ubiquinone. Couples the redox reaction to proton translocation (for every two electrons transferred, four hydrogen ions are translocated across the cytoplasmic membrane), and thus conserves the redox energy in a proton gradient. This subunit may bind ubiquinone. The chain is NADH-quinone oxidoreductase subunit H 2 from Solibacter usitatus (strain Ellin6076).